The primary structure comprises 309 residues: 4-hydroxy-3-methylbut-2-enyl diphosphate reductase (309 aa).

Cys-13 is a [4Fe-4S] cluster binding site. (2E)-4-hydroxy-3-methylbut-2-enyl diphosphate-binding residues include His-42 and His-75. Dimethylallyl diphosphate-binding residues include His-42 and His-75. His-42 and His-75 together coordinate isopentenyl diphosphate. Cys-97 provides a ligand contact to [4Fe-4S] cluster. (2E)-4-hydroxy-3-methylbut-2-enyl diphosphate is bound at residue His-125. His-125 is a binding site for dimethylallyl diphosphate. His-125 provides a ligand contact to isopentenyl diphosphate. Glu-127 (proton donor) is an active-site residue. A (2E)-4-hydroxy-3-methylbut-2-enyl diphosphate-binding site is contributed by Thr-165. A [4Fe-4S] cluster-binding site is contributed by Cys-195. Ser-223, Ser-224, Asn-225, and Ser-267 together coordinate (2E)-4-hydroxy-3-methylbut-2-enyl diphosphate. Residues Ser-223, Ser-224, Asn-225, and Ser-267 each coordinate dimethylallyl diphosphate. Isopentenyl diphosphate is bound by residues Ser-223, Ser-224, Asn-225, and Ser-267.

The protein belongs to the IspH family. Requires [4Fe-4S] cluster as cofactor.

The catalysed reaction is isopentenyl diphosphate + 2 oxidized [2Fe-2S]-[ferredoxin] + H2O = (2E)-4-hydroxy-3-methylbut-2-enyl diphosphate + 2 reduced [2Fe-2S]-[ferredoxin] + 2 H(+). It carries out the reaction dimethylallyl diphosphate + 2 oxidized [2Fe-2S]-[ferredoxin] + H2O = (2E)-4-hydroxy-3-methylbut-2-enyl diphosphate + 2 reduced [2Fe-2S]-[ferredoxin] + 2 H(+). The protein operates within isoprenoid biosynthesis; dimethylallyl diphosphate biosynthesis; dimethylallyl diphosphate from (2E)-4-hydroxy-3-methylbutenyl diphosphate: step 1/1. It functions in the pathway isoprenoid biosynthesis; isopentenyl diphosphate biosynthesis via DXP pathway; isopentenyl diphosphate from 1-deoxy-D-xylulose 5-phosphate: step 6/6. In terms of biological role, catalyzes the conversion of 1-hydroxy-2-methyl-2-(E)-butenyl 4-diphosphate (HMBPP) into a mixture of isopentenyl diphosphate (IPP) and dimethylallyl diphosphate (DMAPP). Acts in the terminal step of the DOXP/MEP pathway for isoprenoid precursor biosynthesis. This is 4-hydroxy-3-methylbut-2-enyl diphosphate reductase from Chlamydia felis (strain Fe/C-56) (Chlamydophila felis).